The chain runs to 255 residues: Myb-related protein Zm38 (255 aa).

HTH myb-type domains are found at residues 9 to 61 (KAHT…INYL) and 62 to 116 (RPDL…RRKL). 2 consecutive DNA-binding regions (H-T-H motif) follow at residues 37–61 (WRSLPKAAGLLRCGKSCRLRWINYL) and 89–112 (WSLIAARLPGRTDNEIKNYWNTHV).

The protein localises to the nucleus. Functionally, transcription factor that negatively regulates genes involved in anthocyanin biosynthesis. The polypeptide is Myb-related protein Zm38 (Zea mays (Maize)).